Consider the following 294-residue polypeptide: ATP synthase gamma chain (294 aa).

This sequence belongs to the ATPase gamma chain family. In terms of assembly, F-type ATPases have 2 components, CF(1) - the catalytic core - and CF(0) - the membrane proton channel. CF(1) has five subunits: alpha(3), beta(3), gamma(1), delta(1), epsilon(1). CF(0) has three main subunits: a, b and c.

Its subcellular location is the cell inner membrane. Functionally, produces ATP from ADP in the presence of a proton gradient across the membrane. The gamma chain is believed to be important in regulating ATPase activity and the flow of protons through the CF(0) complex. The sequence is that of ATP synthase gamma chain from Campylobacter lari (strain RM2100 / D67 / ATCC BAA-1060).